The sequence spans 329 residues: GTPase Obg (329 aa).

The 159-residue stretch at 1–159 (MQFIDEAKIF…MWVWLHLKLL (159 aa)) folds into the Obg domain. Residues 160–327 (SDVGLVGLPN…LLANILSELQ (168 aa)) enclose the OBG-type G domain. GTP-binding positions include 166-173 (GLPNAGKS), 191-195 (FTTLT), 212-215 (DIPG), 279-282 (TKTD), and 308-310 (SSY). Positions 173 and 193 each coordinate Mg(2+).

Belongs to the TRAFAC class OBG-HflX-like GTPase superfamily. OBG GTPase family. In terms of assembly, monomer. Mg(2+) is required as a cofactor.

The protein resides in the cytoplasm. Functionally, an essential GTPase which binds GTP, GDP and possibly (p)ppGpp with moderate affinity, with high nucleotide exchange rates and a fairly low GTP hydrolysis rate. Plays a role in control of the cell cycle, stress response, ribosome biogenesis and in those bacteria that undergo differentiation, in morphogenesis control. This is GTPase Obg from Orientia tsutsugamushi (strain Boryong) (Rickettsia tsutsugamushi).